A 51-amino-acid chain; its full sequence is Conotoxin Cal6.33 (51 aa).

Positions 1–22 (MKLTCVVIIAVLILTACQFTTA) are cleaved as a signal peptide. 3 disulfides stabilise this stretch: Cys-25-Cys-39, Cys-32-Cys-43, and Cys-38-Cys-50.

This sequence belongs to the conotoxin O1 superfamily. In terms of tissue distribution, expressed by the venom duct.

It is found in the secreted. Its function is as follows. Probable neurotoxin. In Californiconus californicus (California cone), this protein is Conotoxin Cal6.33.